The following is a 206-amino-acid chain: FMN-dependent NADH:quinone oxidoreductase (206 aa).

Residues Ser-10, 16–18 (SSS), 93–96 (MYNF), and 137–140 (TRGG) each bind FMN.

The protein belongs to the azoreductase type 1 family. In terms of assembly, homodimer. FMN is required as a cofactor.

The enzyme catalyses 2 a quinone + NADH + H(+) = 2 a 1,4-benzosemiquinone + NAD(+). It catalyses the reaction N,N-dimethyl-1,4-phenylenediamine + anthranilate + 2 NAD(+) = 2-(4-dimethylaminophenyl)diazenylbenzoate + 2 NADH + 2 H(+). Quinone reductase that provides resistance to thiol-specific stress caused by electrophilic quinones. Functionally, also exhibits azoreductase activity. Catalyzes the reductive cleavage of the azo bond in aromatic azo compounds to the corresponding amines. The protein is FMN-dependent NADH:quinone oxidoreductase of Psychromonas ingrahamii (strain DSM 17664 / CCUG 51855 / 37).